A 203-amino-acid polypeptide reads, in one-letter code: Large ribosomal subunit protein bL25 (203 aa).

The interval 1–21 (MMENLQVNQREKKTRHSSRQC) is disordered. Over residues 12-21 (KKTRHSSRQC) the composition is skewed to basic residues.

The protein belongs to the bacterial ribosomal protein bL25 family. CTC subfamily. In terms of assembly, part of the 50S ribosomal subunit; part of the 5S rRNA/L5/L18/L25 subcomplex. Contacts the 5S rRNA. Binds to the 5S rRNA independently of L5 and L18.

In terms of biological role, this is one of the proteins that binds to the 5S RNA in the ribosome where it forms part of the central protuberance. The protein is Large ribosomal subunit protein bL25 of Clostridium perfringens (strain 13 / Type A).